We begin with the raw amino-acid sequence, 207 residues long: UPF0126 inner membrane protein YadS (207 aa).

The chain crosses the membrane as a helical span at residues 1–21 (MLVYWLDIVGTAVFAISGVLL). Residues 22 to 29 (AGKLRMDP) are Cytoplasmic-facing. The chain crosses the membrane as a helical span at residues 30 to 50 (FGVLVLGVVTAVGGGTIRDMA). Residues 51–58 (LDHGPVFW) are Periplasmic-facing. Residues 59-79 (VKDPTDLVVAMVTSMLTIVLV) traverse the membrane as a helical segment. The Cytoplasmic segment spans residues 80 to 85 (RQPRRL). Residues 86-106 (PKWMLPVLDAVGLAVFVGIGV) form a helical membrane-spanning segment. Residues 107 to 112 (NKAFNA) lie on the Periplasmic side of the membrane. Residues 113 to 133 (EAGPLIAVCMGVITGVGGGII) form a helical membrane-spanning segment. Over 134 to 148 (RDVLAREIPMILRTE) the chain is Cytoplasmic. Residues 149-169 (IYATACIIGGIVHATAYYTFS) traverse the membrane as a helical segment. Residue Val170 is a topological domain, periplasmic. The helical transmembrane segment at 171 to 191 (PLETASMMGMVVTLLIRLAAI) threads the bilayer. Residues 192-207 (RWHLKLPTFALDENGR) lie on the Cytoplasmic side of the membrane.

Belongs to the UPF0126 family.

Its subcellular location is the cell inner membrane. The chain is UPF0126 inner membrane protein YadS (yadS) from Escherichia coli O6:H1 (strain CFT073 / ATCC 700928 / UPEC).